The sequence spans 437 residues: ATP-dependent RNA helicase SUB2 (437 aa).

A compositionally biased stretch (acidic residues) spans 1 to 19 (MSHEAEEDLLEYSDNEQEV). The tract at residues 1 to 45 (MSHEAEEDLLEYSDNEQEVQVDNKATEVNAEGNGESQAKDSDKKG) is disordered. Residues 53–81 (TGFKDFLLKPELSRAIIDCGFEHPSEVQQ) carry the Q motif motif. Residues 84 to 259 (IPQSIHGTDV…RRFLQNPLEI (176 aa)) enclose the Helicase ATP-binding domain. 97–104 (AKSGLGKT) serves as a coordination point for ATP. Positions 206–209 (DECD) match the DECD box motif. A Helicase C-terminal domain is found at 287–432 (KLAQLLDDLE…EFPEEGVDPS (146 aa)).

The protein belongs to the DEAD box helicase family. DECD subfamily.

The protein localises to the nucleus. It catalyses the reaction ATP + H2O = ADP + phosphate + H(+). In terms of biological role, ATP-binding RNA helicase involved in transcription elongation and required for the export of mRNA out of the nucleus. SUB2 also plays a role in pre-mRNA splicing and spliceosome assembly. May be involved in rDNA and telomeric silencing, and maintenance of genome integrity. The sequence is that of ATP-dependent RNA helicase SUB2 (SUB2) from Kluyveromyces lactis (strain ATCC 8585 / CBS 2359 / DSM 70799 / NBRC 1267 / NRRL Y-1140 / WM37) (Yeast).